Consider the following 339-residue polypeptide: Malate dehydrogenase 3, cytoplasmic (339 aa).

NAD(+)-binding positions include 22–23 (NI), aspartate 49, and glycine 96. Oxaloacetate is bound at residue arginine 105. The NAD(+) site is built by glutamine 119 and asparagine 138. Oxaloacetate-binding residues include asparagine 138, arginine 169, histidine 194, and serine 249. The active-site Proton acceptor is the histidine 194.

This sequence belongs to the LDH/MDH superfamily. MDH type 2 family. As to expression, expressed in rosette leaves at low levels.

It is found in the cytoplasm. It catalyses the reaction (S)-malate + NAD(+) = oxaloacetate + NADH + H(+). Catalyzes a reversible NAD-dependent dehydrogenase reaction involved in central metabolism and redox homeostasis between organelle compartments. The chain is Malate dehydrogenase 3, cytoplasmic from Arabidopsis thaliana (Mouse-ear cress).